A 139-amino-acid polypeptide reads, in one-letter code: FLYWCH family member 2 (139 aa).

Disordered stretches follow at residues 1–36 (MPQP…PRKP) and 86–139 (EAQR…STSP). Residues 98-107 (PEQKRSKQNL) show a composition bias toward basic and acidic residues. Positions 120–130 (VSSSSSEETTV) are enriched in low complexity.

The sequence is that of FLYWCH family member 2 (Flywch2) from Mus musculus (Mouse).